Consider the following 551-residue polypeptide: E3 SUMO-protein ligase CBX4 (551 aa).

The Chromo domain occupies 11-69 (FAVESIEKKRIRKGRVEYLVKWRGWSPKYNTWEPEENILDPRLLIAFQNRERQEQLMGY). Residues lysine 77, lysine 106, lysine 114, and lysine 125 each participate in a glycyl lysine isopeptide (Lys-Gly) (interchain with G-Cter in SUMO2) cross-link. A disordered region spans residues 125 to 152 (KKHHQYQPHSKERSGKPPPPGKSGKYYY). Lysine 149 carries the post-translational modification N6-acetyllysine; alternate. A Glycyl lysine isopeptide (Lys-Gly) (interchain with G-Cter in SUMO2); alternate cross-link involves residue lysine 149. Residues lysine 157, lysine 167, and lysine 178 each participate in a glycyl lysine isopeptide (Lys-Gly) (interchain with G-Cter in SUMO2) cross-link. The tract at residues 172-193 (QYQGGHKEAPSPTCPDLGTKSH) is disordered. A Phosphoserine modification is found at serine 182. Residues lysine 191, lysine 205, lysine 212, lysine 223, lysine 249, lysine 268, lysine 278, and lysine 280 each participate in a glycyl lysine isopeptide (Lys-Gly) (interchain with G-Cter in SUMO2) cross-link. Positions 216–244 (GGAGAPGKGSEKGPPNGMTPAPKEAVTGN) are disordered. 3 stretches are compositionally biased toward basic and acidic residues: residues 281-291 (SGEAAEGEARS), 298-310 (AAEE…DRTF), and 317-332 (SEEK…REEE). Disordered stretches follow at residues 281–399 (SGEA…TVGL) and 430–451 (TPTC…PTAA). Glycyl lysine isopeptide (Lys-Gly) (interchain with G-Cter in SUMO2) cross-links involve residues lysine 321, lysine 353, and lysine 366. The segment covering 381 to 396 (PAHHHHHHHHHHHHHT) has biased composition (basic residues). Serine 463 is subject to Phosphoserine. Lysine 490 participates in a covalent cross-link: Glycyl lysine isopeptide (Lys-Gly) (interchain with G-Cter in SUMO2); alternate. Residue lysine 490 forms a Glycyl lysine isopeptide (Lys-Gly) (interchain with G-Cter in SUMO); alternate linkage.

Interacts with SUV39H1 and HIPK2. Interacts with CSNK2B. Component of a PRC1-like complex. The composition of the PRC1 complex differs between the PRC1 complex in pluripotent embryonic stem cells containing RNF2, CBX7 and PCGF2, and the PRC1 complex in differentiating cells containing RNF2, CBX2, CBX4 and BMI1. Interacts with RNF2. Interacts (via chromodomain) with histone H3K9Me3 and single-stranded RNA (ssRNA). Interacts with CHTOP. May interact with H3C15 and H3C1. Interacts with PRDM1. Post-translationally, ubiquitinated. Ubiquitination regulates the function of the Polycomb group (PcG) multiprotein PRC1-like complex. Deubiquitinated by USP26. In terms of tissue distribution, expressed in embryoid bodies.

It localises to the nucleus. It is found in the nucleus speckle. It participates in protein modification; protein sumoylation. E3 SUMO-protein ligase that catalyzes sumoylation of target proteins by promoting the transfer of SUMO from the E2 enzyme to the substrate. Involved in the sumoylation of HNRNPK, a p53/TP53 transcriptional coactivator, hence indirectly regulates p53/TP53 transcriptional activation resulting in p21/CDKN1A expression. Its function is as follows. Component of a Polycomb group (PcG) multiprotein PRC1-like complex, a complex class required to maintain the transcriptionally repressive state of many genes, including Hox genes, throughout development. PcG PRC1 complex acts via chromatin remodeling and modification of histones; it mediates monoubiquitination of histone H2A 'Lys-119', rendering chromatin heritably changed in its expressibility. Binds to histone H3 trimethylated at 'Lys-9' (H3K9me3). Plays a role in the lineage differentiation of the germ layers in embryonic development. This Mus musculus (Mouse) protein is E3 SUMO-protein ligase CBX4 (Cbx4).